A 113-amino-acid chain; its full sequence is Large ribosomal subunit protein P1 (113 aa).

The segment at 84 to 113 (APAAAAKKETKKEEVKKEESDDDMGMGLFD) is disordered. A compositionally biased stretch (basic and acidic residues) spans 89-102 (AKKETKKEEVKKEE).

Belongs to the eukaryotic ribosomal protein P1/P2 family. In terms of assembly, P1 and P2 exist as dimers at the large ribosomal subunit.

In terms of biological role, plays an important role in the elongation step of protein synthesis. The protein is Large ribosomal subunit protein P1 (rplp1) of Dictyostelium discoideum (Social amoeba).